The sequence spans 996 residues: Oxysterol-binding protein homolog 3 (996 aa).

The tract at residues 1-183 is GOLD domain; sequence METIDIQNRS…KKKILFNASV (183 aa). A disordered region spans residues 75–114; it reads GSSSNIEEHHRRSSQHSHSSSNGSDNKRKERSYSSLSISG. 2 positions are modified to phosphoserine: Ser190 and Ser193. The residue at position 210 (Thr210) is a Phosphothreonine. The PH domain occupies 221-315; it reads GRYLQGYLLK…WVDALQTCFD (95 aa). Thr323 carries the post-translational modification Phosphothreonine. Ser324 bears the Phosphoserine mark. Phosphothreonine is present on residues Thr325 and Thr352. A disordered region spans residues 338 to 372; it reads EVINKSSPQDHDHLTPTATTKSALSHRQHTQKDMD. Positions 514 to 520 match the FFAT motif; the sequence is EFFDAEE. The segment at 556–611 is disordered; it reads KEVQLSGSEQIASSSVESYTTNDENHSRKHLKNRHKNRRRGHPHHQKTKSAQSSTE. Residues 558-577 show a composition bias toward polar residues; that stretch reads VQLSGSEQIASSSVESYTTN. Over residues 582-603 the composition is skewed to basic residues; sequence SRKHLKNRHKNRRRGHPHHQKT. Position 605 is a phosphoserine (Ser605). The tract at residues 642 to 982 is OSBP-related domain (ORD); the sequence is SLLSFLRKNV…YITGPKSYWE (341 aa). A 1,2-diacyl-sn-glycero-3-phospho-(1D-myo-inositol 4-phosphate) contacts are provided by residues 657-660, Lys717, 745-746, and 945-949; these read SIAM, HR, and EQLQR.

The protein belongs to the OSBP family. As to quaternary structure, interacts with SCS2.

The protein resides in the cytoplasm. It is found in the endoplasmic reticulum membrane. Functionally, lipid transport protein (LTP) involved in non-vesicular transfer of lipids between membranes. Functions in phosphoinositide-coupled directional transport of various lipids by carrying the lipid molecule in a hydrophobic pocket and transferring it between membranes through the cytosol. Involved in maintenance of intracellular sterol distribution and homeostasis. May serve as a sensor of PI4P levels at PM-ER membrane contact site, regulating PI4P phosphatase SAC1 activity. May be involved in ergosterol transport from the plasma membrane (PM) to the ER, however it does not bind sterols directly. Plays a role in the positive regulation of vesicular transport of ceramide from the ER to the Golgi, negatively regulating COPII-mediated ER export of cargos. The sequence is that of Oxysterol-binding protein homolog 3 from Saccharomyces cerevisiae (strain ATCC 204508 / S288c) (Baker's yeast).